The following is a 239-amino-acid chain: Probable 2-phosphosulfolactate phosphatase (239 aa).

Belongs to the ComB family. Mg(2+) is required as a cofactor.

It carries out the reaction (2R)-O-phospho-3-sulfolactate + H2O = (2R)-3-sulfolactate + phosphate. This chain is Probable 2-phosphosulfolactate phosphatase, found in Clostridium botulinum (strain Okra / Type B1).